The chain runs to 72 residues: UPF0270 protein YheU (72 aa).

This sequence belongs to the UPF0270 family.

In Shigella flexneri serotype 5b (strain 8401), this protein is UPF0270 protein YheU.